A 123-amino-acid chain; its full sequence is Snaclec echicetin subunit beta (123 aa).

One can recognise a C-type lectin domain in the interval 1 to 121 (NCLPDWSVYE…SGEFYFVCKC (121 aa)). 3 disulfides stabilise this stretch: C2-C13, C30-C119, and C96-C111.

The protein belongs to the snaclec family. In terms of assembly, heterodimer of subunits alpha and beta; disulfide-linked. Forms an active complex with the pentameric immunoglobuline Mkappa (IgMkappa). As to expression, expressed by the venom gland.

It is found in the secreted. Functionally, echicetin itself inhibits aggregation of washed platelets induced by vWF, thrombin or alboaggregin-A. However, when complexed with the pentameric plasma immunoglobulin Mkappa (IgMkappa), echicetin binds specifically to GPIb and activates platelets. This is caused by P-selectin expression and activation of alpha-IIb/beta-3 as well as tyrosine phosphorylation of several signal transduction molecules, including p53/56(LYN), p64, p72(SYK), p70 to p90, and p120. In vivo, it induces thrombocytopenia when injected into mice, probably accounting of activation of platelets rather than inhibition. The sequence is that of Snaclec echicetin subunit beta from Echis carinatus sochureki (Saw-scaled viper).